Reading from the N-terminus, the 63-residue chain is Large ribosomal subunit protein bL28 (63 aa).

Belongs to the bacterial ribosomal protein bL28 family.

This chain is Large ribosomal subunit protein bL28, found in Clostridium botulinum (strain Alaska E43 / Type E3).